Here is a 329-residue protein sequence, read N- to C-terminus: MASQLTDAFARKFYYLRLSITDVCNFRCTYCLPDGYKPSGVTNKGFLTVDEIRRVTRAFASLGTEKVRLTGGEPSLRRDFTDIIAAVRENDAIRQIAVTTNGYRLERDVANWRDAGLTGINVSVDSLDARQFHAITGQDKFNQVMAGIDAAFEAGFEKVKVNTVLMRDVNHHQLDTFLNWIQHRPIQLRFIELMETGEGSELFRKHHISGQVLRDELLRRGWIHQLRQRSDGPAQVFCHPDYAGEIGLIMPYEKDFCATCNRLRVSSIGKLHLCLFGEGGVNLRDLLEDDTQQQALEARISAALREKKQTHFLHQNNTGITQNLSYIGG.

In terms of domain architecture, Radical SAM core spans 8–234; that stretch reads AFARKFYYLR…QLRQRSDGPA (227 aa). Arg17 is a GTP binding site. [4Fe-4S] cluster-binding residues include Cys24 and Cys28. Tyr30 contributes to the S-adenosyl-L-methionine binding site. Cys31 contributes to the [4Fe-4S] cluster binding site. Arg68 is a binding site for GTP. Gly72 contributes to the S-adenosyl-L-methionine binding site. Thr99 contacts GTP. Ser123 contributes to the S-adenosyl-L-methionine binding site. Lys160 serves as a coordination point for GTP. S-adenosyl-L-methionine is bound at residue Met194. Residues Cys257 and Cys260 each coordinate [4Fe-4S] cluster. 262-264 serves as a coordination point for GTP; that stretch reads RLR. Cys274 lines the [4Fe-4S] cluster pocket.

Belongs to the radical SAM superfamily. MoaA family. Monomer and homodimer. [4Fe-4S] cluster is required as a cofactor.

It carries out the reaction GTP + AH2 + S-adenosyl-L-methionine = (8S)-3',8-cyclo-7,8-dihydroguanosine 5'-triphosphate + 5'-deoxyadenosine + L-methionine + A + H(+). The protein operates within cofactor biosynthesis; molybdopterin biosynthesis. Functionally, catalyzes the cyclization of GTP to (8S)-3',8-cyclo-7,8-dihydroguanosine 5'-triphosphate. The sequence is that of GTP 3',8-cyclase from Escherichia coli O139:H28 (strain E24377A / ETEC).